Reading from the N-terminus, the 579-residue chain is Viral transcription factor IE2 (579 aa).

Basic and acidic residues predominate over residues 1–11; sequence MESSAKRKMDP. Disordered stretches follow at residues 1 to 30 and 99 to 161; these read MESS…TPVT and DSSS…VIIK. Residues 99-133 are compositionally biased toward polar residues; sequence DSSSTGPTLTTHSCSVSSAPLNKPTPTSVAVTNTP. Residues Lys-175 and Lys-180 each participate in a glycyl lysine isopeptide (Lys-Gly) (interchain with G-Cter in SUMO) cross-link. The SUMO-interacting motif 1/SIM1 motif lies at 199-202; the sequence is CIVI. The non-covalent SUMO1 binding region (SIM) stretch occupies residues 200-208; that stretch reads IVISDSEEE. A phosphoserine mark is found at Ser-203 and Ser-205. The tract at residues 206–335 is disordered; it reads EEEQGEEVET…SKRISELDNE (130 aa). Composition is skewed to low complexity over residues 216-236, 259-270, and 301-316; these read RGAT…TSPT, SSSSSSCSSASD, and AASS…SSGG. The SUMO-interacting motif 1/SIM2 motif lies at 409 to 412; sequence IQII. The SUMO-interacting motif 1/SIM3 motif lies at 500 to 503; the sequence is VDLL.

The protein belongs to the HHV-5 IE2 protein family. As to quaternary structure, interacts with host SUMO-modified form of TATA-binding protein (TBP)-associated factor 12/TAF12 in a SIM-dependent manner; this interaction increases the transactivation activity of IE2. Interacts with host CHAF1A. Interacts with several components of the host transcriptional machinery including TBP, TF2B and CREB1. Interacts with host DNA replication licensing factor MCM3. Interacts with host PLSCR1; this interaction inhibits IE2 transactivating activity. In terms of processing, phosphorylated by host CK2 at Ser-203 and Ser-205; leading to enhanced SUMOylation. SUMOylated; SUMOylation is enhanced when IE2 is phosphorylated by host CK2. The sumoylation is necessary for efficient replication of the virus and thus for the function of this viral transcription factor.

The protein localises to the host nucleus. In terms of biological role, stimulates viral early and late gene expression and thus play a crucial role in the regulation of productive infection. Selectively drives host RNA Pol II transcription initiation at a subset of viral early-late and late promoters without substantially affecting Pol II transcription of expressed host genes. Mechanistically, forms a repressive complex at the major immediate-early promoter region involving direct association with host nucleosomes and TBP. Concerning activation, stimulates transcription by binding nearby, but not within, core promoter regions. In addition, activates quiescent cells to reenter the cell cycle and up-regulates several E2F-responsive genes, which are responsible for pushing the cell into S phase. In S-phase, inhibits cellular DNA synthesis and blocks further cell cycle progression. The protein is Viral transcription factor IE2 (UL122) of Homo sapiens (Human).